Consider the following 60-residue polypeptide: Large ribosomal subunit protein uL30 (60 aa).

This sequence belongs to the universal ribosomal protein uL30 family. As to quaternary structure, part of the 50S ribosomal subunit.

The sequence is that of Large ribosomal subunit protein uL30 from Pediococcus pentosaceus (strain ATCC 25745 / CCUG 21536 / LMG 10740 / 183-1w).